The primary structure comprises 2725 residues: Teneurin-1 (2725 aa).

A disordered region spans residues 1–48 (MEQTDCKPYQPLPKVKHEMDLAYTSSSDESEDGRKPRQSYNSRETLHE). A Teneurin N-terminal domain is found at 1-318 (MEQTDCKPYQ…KPYRCCNWKC (318 aa)). Residues 1-324 (MEQTDCKPYQ…NWKCTALSAT (324 aa)) are Cytoplasmic-facing. The Nuclear localization signal (NLS) motif lies at 62 to 65 (RKRK). A Phosphoserine modification is found at S105. T109 carries the post-translational modification Phosphothreonine. S116 carries the phosphoserine modification. The segment covering 174–189 (AGSTQDVQSSPHNQFT) has biased composition (polar residues). Residues 174–241 (AGSTQDVQSS…PAPPTSTQDS (68 aa)) form a disordered region. Positions 192-201 (PLPPPPPPPH) are enriched in pro residues. Positions 290–297 (PPPRPLPR) match the Required for interaction with SORBS1 (Ten-1 ICD form) motif. A helical membrane pass occupies residues 325 to 345 (AITVTLALLLAYVIAVHLFGL). Residues 346–2725 (TWQLQPVEGE…FMRQSEIGRR (2380 aa)) are Extracellular-facing. An N-linked (GlcNAc...) asparagine glycan is attached at N433. EGF-like domains lie at 528–559 (IMDD…PDCA), 560–591 (RDSC…ECDV), 592–624 (PEEQ…EICE), 625–657 (EEDC…NCET), 658–691 (PLPV…SDCS), 692–721 (TELC…GPTC), 722–753 (EERS…DHCT), and 761–796 (VRDG…TGCN). Disulfide bonds link C532/C542, C536/C547, C549/C558, C567/C578, C580/C589, C596/C607, C601/C612, C614/C623, C628/C639, C633/C644, C646/C655, C666/C679, C681/C690, C695/C705, C699/C710, C712/C721, C726/C736, C730/C741, C743/C752, C765/C775, C769/C784, and C786/C795. Residues N905 and N1084 are each glycosylated (N-linked (GlcNAc...) asparagine). NHL repeat units follow at residues 1194-1219 (LFAP…VRRI), 1292-1336 (SHCG…NAVI), 1351-1402 (LSCD…IAGR), 1414-1458 (FLVS…VTTN), and 1481-1524 (CFSG…ISRN). One copy of the YD 1 repeat lies at 1534–1553 (YEIASPADQELYQFTVNGTH). N-linked (GlcNAc...) asparagine glycosylation is found at N1550 and N1567. YD repeat units lie at residues 1570–1590 (YNSE…VHIR), 1608–1632 (YWLT…ALMT), 1633–1654 (YPGN…TVYE), and 1655–1675 (YDPE…SSFH). 5 N-linked (GlcNAc...) asparagine glycosylation sites follow: N1663, N1699, N1757, N1781, and N1842. YD repeat units follow at residues 1845 to 1864 (YSPS…EKME), 1865 to 1885 (YDQS…WSYT), 1886 to 1904 (YLEK…YIFE), 1905 to 1925 (YDQP…HSLQ), 1933 to 1949 (YRNI…FIQD), 1950 to 1969 (YSRD…RRVL), 1970 to 1989 (YKYT…TQVT), 1992 to 2012 (YEES…FICT), 2015 to 2035 (YRQT…EGLV), 2085 to 2105 (YDLN…FSAN), and 2113 to 2133 (YEIL…VGRM). N-linked (GlcNAc...) asparagine glycosylation occurs at N2145. 5 YD repeats span residues 2153–2173 (YDAD…WRYS), 2174–2194 (YDLN…LTPL), 2196–2216 (YDLR…DEDG), 2228–2248 (YNSN…TVQY), and 2250–2270 (YDGL…LQFF). N2285 is a glycosylation site (N-linked (GlcNAc...) asparagine). YD repeat units follow at residues 2296-2313 (YDLQ…GEEY) and 2314-2337 (YVAC…IKEI). The residue at position 2580 (S2580) is a Phosphoserine. N2602 carries an N-linked (GlcNAc...) asparagine glycan.

It belongs to the tenascin family. Teneurin subfamily. As to quaternary structure, homodimer; disulfide-linked. Heterodimer with either TENM2 or TENM3. May also form heterodimer with TENM4. Ten-1 ICD interacts with SORBS1 (via third SH3 domain). Interacts with MBD1. Ten-1 ICD interacts with HINT1. Post-translationally, derives from the plasma membrane form by proteolytic processing. Further proteolytic cleavage may be generated. Expressed in fetal brain.

It localises to the cell membrane. It is found in the nucleus. The protein resides in the nucleus speckle. The protein localises to the nucleus matrix. Its subcellular location is the cytoplasm. It localises to the cytoskeleton. Involved in neural development, regulating the establishment of proper connectivity within the nervous system. May function as a cellular signal transducer. Its function is as follows. Plays a role in the regulation of neuroplasticity in the limbic system. Mediates a rapid reorganization of actin- and tubulin-based cytoskeleton elements with an increase in dendritic arborization and spine density formation of neurons in the hippocampus and amygdala. Induces BDNF transcription inhibition in neurons. Activates the mitogen-activated protein (MAP) kinase 2 (MEK2) and extracellular signal-regulated kinase (ERK) cascade. Also acts as a bioactive neuroprotective peptide on limbic neurons of the brain and regulates stress-induced behavior: attenuates alkalosis-associated necrotic cell death and the effects of corticotropin-releasing factor (CRF) on c-fos/FOS induction and on the reinstatement of cocaine seeking. In terms of biological role, induces gene transcription activation. The polypeptide is Teneurin-1 (TENM1) (Homo sapiens (Human)).